Consider the following 229-residue polypeptide: UPF0173 metal-dependent hydrolase Hbut_0886 (229 aa).

This sequence belongs to the UPF0173 family.

This chain is UPF0173 metal-dependent hydrolase Hbut_0886, found in Hyperthermus butylicus (strain DSM 5456 / JCM 9403 / PLM1-5).